A 256-amino-acid polypeptide reads, in one-letter code: Probable aquaporin TIP-type alpha (256 aa).

Residues 1–24 lie on the Cytoplasmic side of the membrane; sequence MATRRYSFGRTDEATHPDSMRASL. S7 bears the Phosphoserine; by CPK mark. The helical transmembrane segment at 25 to 44 threads the bilayer; the sequence is AEFASTFIFVFAGEGSGLAL. The Vacuolar segment spans residues 45–57; sequence VKIYQDSAFSAGE. A helical membrane pass occupies residues 58–77; the sequence is LLALALAHAFALFAAVSASM. The Cytoplasmic portion of the chain corresponds to 78-102; that stretch reads HVSGGHVNPAVSFGALIGGRISVIR. An NPA 1 motif is present at residues 85 to 87; sequence NPA. Residues 103–121 form a helical membrane-spanning segment; it reads AVYYWIAQLLGSIVAALVL. Over 122–143 the chain is Vacuolar; that stretch reads RLVTNNMRPSGFHVSPGVGVGH. The chain crosses the membrane as a helical span at residues 144–164; that stretch reads MFILEVVMTFGLMYTVYGTAI. Topologically, residues 165 to 169 are cytoplasmic; it reads DPKRG. Residues 170–189 form a helical membrane-spanning segment; the sequence is AVSYIAPLAIGLIVGANILV. The Vacuolar segment spans residues 190–216; sequence GGPFDGACMNPALAFGPSLVGWQWHQH. The NPA 2 motif lies at 199 to 201; that stretch reads NPA. The helical transmembrane segment at 217 to 239 threads the bilayer; that stretch reads WIFWVGPLLGAALAALVYEYAVI. Over 240–256 the chain is Cytoplasmic; it reads PIEPPPHHHQPLATEDY.

This sequence belongs to the MIP/aquaporin (TC 1.A.8) family. TIP (TC 1.A.8.10) subfamily. Phosphorylated by a tonoplast-bound calcium-dependent protein kinase. In terms of tissue distribution, found in all seed tissues that are alive at seed maturity, but not in tissues that lose viability during seed maturation.

The protein resides in the vacuole membrane. Functionally, channel protein in tonoplast. These proteins may allow the diffusion of amino acids and/or peptides from the vacuolar compartment to the cytoplasm. The chain is Probable aquaporin TIP-type alpha from Phaseolus vulgaris (Kidney bean).